The primary structure comprises 158 residues: Small ribosomal subunit protein uS7 (158 aa).

This sequence belongs to the universal ribosomal protein uS7 family. As to quaternary structure, part of the 30S ribosomal subunit. Contacts proteins S9 and S11.

One of the primary rRNA binding proteins, it binds directly to 16S rRNA where it nucleates assembly of the head domain of the 30S subunit. Is located at the subunit interface close to the decoding center, probably blocks exit of the E-site tRNA. The protein is Small ribosomal subunit protein uS7 of Flavobacterium johnsoniae (strain ATCC 17061 / DSM 2064 / JCM 8514 / BCRC 14874 / CCUG 350202 / NBRC 14942 / NCIMB 11054 / UW101) (Cytophaga johnsonae).